Consider the following 485-residue polypeptide: MHNKSVAELSRELESGRISSVELTQQFLDRLKTEDGKYNSFITISDEQALAEARAADEMRAAGKATVWTGVPFAHKDIFCTSGIRTSCGSKMLDNFVPPYDATVTANFKAAGAVCLGKTNMDEFAMGSSNESSFYGAVTNPWGLSGGDKRVPGGSSGGSAAAVAARLVPAATGTDTGGSIRQPAALCGITGLKPTYGRVSRYGMIAFASSLDQGGPMARTAEDAALMLNVMAGHDPKDSTCIDREVPDYTATLNEPLKGLKIGLPKEYFSDQLAPAMEEQVRNAIREYEKLGATVKEVSLPNAKLAIAAYYVIAPAEASANLSRFDGVRYGYRCEDPKDLMDMYTRSRAEGFGNEVKRRILVGSYALSAGYFDAYYLKAQKVRRLIQQDFINAFKEVDVLMSPVSPTPAFRQGEKNTDPVSMYLEDVFTIAINLAGIPAMSVPAGFVDGLPVGLQIIGDYFSEARLLNAAHQFQQVTDWHQREPQ.

Catalysis depends on charge relay system residues K76 and S155. S179 serves as the catalytic Acyl-ester intermediate.

Belongs to the amidase family. GatA subfamily. As to quaternary structure, heterotrimer of A, B and C subunits.

It carries out the reaction L-glutamyl-tRNA(Gln) + L-glutamine + ATP + H2O = L-glutaminyl-tRNA(Gln) + L-glutamate + ADP + phosphate + H(+). Allows the formation of correctly charged Gln-tRNA(Gln) through the transamidation of misacylated Glu-tRNA(Gln) in organisms which lack glutaminyl-tRNA synthetase. The reaction takes place in the presence of glutamine and ATP through an activated gamma-phospho-Glu-tRNA(Gln). This chain is Glutamyl-tRNA(Gln) amidotransferase subunit A, found in Marinobacter nauticus (strain ATCC 700491 / DSM 11845 / VT8) (Marinobacter aquaeolei).